The primary structure comprises 421 residues: Inner membrane protein YihN (421 aa).

The Periplasmic portion of the chain corresponds to 1–44; the sequence is MLTKKKWALFSLLTLCGGTIYKLPSLKDAFYIPMQEYFHLTNGQ. The chain crosses the membrane as a helical span at residues 45–65; sequence IGNAMSVNSFVTTVGFFLSIY. Residues 66 to 73 lie on the Cytoplasmic side of the membrane; the sequence is FADKLPRR. The helical transmembrane segment at 74–91 threads the bilayer; it reads YTMSFSLIATGLLGVYLT. Residues 92 to 95 are Periplasmic-facing; sequence TMPG. A helical transmembrane segment spans residues 96 to 118; that stretch reads YWGILFVWALFGVTCDMMNWPVL. At 119 to 146 the chain is on the cytoplasmic side; it reads LKSVSRLGNSEQQGRLFGFFETGRGIVD. Residues 147–167 traverse the membrane as a helical segment; it reads TVVAFSALAVFTWFGSGLLGF. Residue lysine 168 is a topological domain, periplasmic. The helical transmembrane segment at 169-189 threads the bilayer; the sequence is AGIWFYSLIVIAVGIIIFFVL. At 190 to 220 the chain is on the cytoplasmic side; it reads NDKEEAPSVEVKKEDGASKNTSMTSVLKDKT. 2 consecutive transmembrane segments (helical) span residues 221-241 and 242-262; these read IWLI…LTFF and IPFL…YGII. Topologically, residues 263–288 are cytoplasmic; that stretch reads NQYCLKMIGGPIGGMISDKILKSPSK. Transmembrane regions (helical) follow at residues 289-309 and 310-330; these read YLCY…MLPH and ESMP…IVFT. Topologically, residues 331-354 are cytoplasmic; the sequence is QRAVFFAPIGEAKIAENKTGAAMA. Residues 355 to 375 form a helical membrane-spanning segment; the sequence is LGSFIGYAPAMFCFSLYGYIL. Over 376–385 the chain is Periplasmic; it reads DLNPGIIGYK. The helical transmembrane segment at 386 to 406 threads the bilayer; it reads IVFGIMACFAFSGAVVSVMLV. Residues 407–421 lie on the Cytoplasmic side of the membrane; the sequence is KRISQRKKEMLAAEA.

Belongs to the major facilitator superfamily.

Its subcellular location is the cell inner membrane. This chain is Inner membrane protein YihN (yihN), found in Escherichia coli (strain K12).